The primary structure comprises 622 residues: Low affinity potassium transport system protein Kup (622 aa).

Helical transmembrane passes span 12–32, 49–69, 103–123, 137–157, 165–185, 213–233, 247–267, 276–296, 337–357, 363–383, 396–416, and 419–439; these read ITLAAIGVVYGDIGTSPLYTL, VFGFLSLIFWLLIFVVSIKYL, VIMGLIGGSFFYGEVVITPAI, PQLDTWIVPLSIIVLTLLFMI, VGKLFAPIMLTWFLILAVLGL, VSFIALGAVVLSITGVEALYA, WFTVVLPSLVLNYFGQGALLL, PFFLLAPDWALIPLLILAALA, IYIPFVNWLLYFAVVVVIVSF, LAAAYGIAVTGTMVLTSILST, FVALILIAFLCVDIPLFSANL, and LLSGGWLPLSLGLIMFTIMTT.

It belongs to the HAK/KUP transporter (TC 2.A.72) family.

The protein localises to the cell inner membrane. It carries out the reaction K(+)(in) + H(+)(in) = K(+)(out) + H(+)(out). Functionally, responsible for the low-affinity transport of potassium into the cell. Likely operates as a K(+):H(+) symporter. This is Low affinity potassium transport system protein Kup from Salmonella gallinarum (strain 287/91 / NCTC 13346).